The chain runs to 122 residues: Large ribosomal subunit protein uL18 (122 aa).

This sequence belongs to the universal ribosomal protein uL18 family. As to quaternary structure, part of the 50S ribosomal subunit; part of the 5S rRNA/L5/L18/L25 subcomplex. Contacts the 5S and 23S rRNAs.

Its function is as follows. This is one of the proteins that bind and probably mediate the attachment of the 5S RNA into the large ribosomal subunit, where it forms part of the central protuberance. This chain is Large ribosomal subunit protein uL18, found in Leptospira interrogans serogroup Icterohaemorrhagiae serovar copenhageni (strain Fiocruz L1-130).